A 252-amino-acid chain; its full sequence is Ubiquitin carboxyl-terminal hydrolase isozyme L1 (252 aa).

Position 1 is an N-acetylmethionine (M1). The UCH catalytic domain occupies 2–250 (QLKPMEINPE…VRFSAVALCK (249 aa)). The interaction with ubiquitin stretch occupies residues 5-10 (PMEINP). The active-site Nucleophile is C119. At S154 the chain carries Phosphoserine. H190 functions as the Proton donor in the catalytic mechanism. Residues 240 to 245 (EVRFSA) are interaction with ubiquitin. Residue C249 is the site of S-farnesyl cysteine attachment. Positions 250 to 252 (KAA) are cleaved as a propeptide — removed in mature form.

This sequence belongs to the peptidase C12 family. Monomer. Homodimer. Interacts with COPS5 and SNCA. Post-translationally, O-glycosylated. Neurons and cells of the diffuse neuroendocrine system and their tumors.

The protein localises to the cytoplasm. It is found in the endoplasmic reticulum membrane. It catalyses the reaction Thiol-dependent hydrolysis of ester, thioester, amide, peptide and isopeptide bonds formed by the C-terminal Gly of ubiquitin (a 76-residue protein attached to proteins as an intracellular targeting signal).. Its function is as follows. Ubiquitin-protein hydrolase involved both in the processing of ubiquitin precursors and of ubiquitinated proteins. This enzyme is a thiol protease that recognizes and hydrolyzes a peptide bond at the C-terminal glycine of ubiquitin. Also binds to free monoubiquitin and may prevent its degradation in lysosomes. The homodimer may have ATP-independent ubiquitin ligase activity. The chain is Ubiquitin carboxyl-terminal hydrolase isozyme L1 (UCHL1) from Bos taurus (Bovine).